A 623-amino-acid chain; its full sequence is ATP-dependent zinc metalloprotease FtsH (623 aa).

At 1 to 7 (MNQSFWR) the chain is on the cytoplasmic side. A helical membrane pass occupies residues 8–28 (PLFAILLFMLVFHLTNIFFAQ). Residues 29–117 (QGAQVAQISY…EVSALSTETP (89 aa)) lie on the Periplasmic side of the membrane. A helical transmembrane segment spans residues 118–138 (LLLNALIYVAPWVILIAIWWV). The Cytoplasmic portion of the chain corresponds to 139 to 623 (GMRSMRSQGP…SLNTAQAPPP (485 aa)). 214 to 221 (GPPGTGKT) provides a ligand contact to ATP. Histidine 435 contacts Zn(2+). Glutamate 436 is an active-site residue. Histidine 439 and aspartate 511 together coordinate Zn(2+).

In the central section; belongs to the AAA ATPase family. This sequence in the C-terminal section; belongs to the peptidase M41 family. Homohexamer. It depends on Zn(2+) as a cofactor.

Its subcellular location is the cell inner membrane. In terms of biological role, acts as a processive, ATP-dependent zinc metallopeptidase for both cytoplasmic and membrane proteins. Plays a role in the quality control of integral membrane proteins. The polypeptide is ATP-dependent zinc metalloprotease FtsH (Pelobacter propionicus (strain DSM 2379 / NBRC 103807 / OttBd1)).